Consider the following 262-residue polypeptide: Demethyldecarbamoylnovobiocin O-methyltransferase (262 aa).

Position 64-65 (64-65 (TM)) interacts with S-adenosyl-L-methionine. Residue Glu-72 is the Proton acceptor of the active site. S-adenosyl-L-methionine is bound by residues 92–96 (ETGVW), 122–126 (DSFQG), Phe-178, 196–197 (DG), and Ser-202. Position 196 (Asp-196) interacts with Mg(2+). Positions 223 and 224 each coordinate Mg(2+).

Belongs to the methyltransferase TylF/MycF family. As to quaternary structure, homodimer. It depends on Mg(2+) as a cofactor.

The catalysed reaction is desmethyldescarbamoylnovobiocin + S-adenosyl-L-methionine = descarbamoylnovobiocin + S-adenosyl-L-homocysteine + H(+). It participates in antibiotic biosynthesis; novobiocin biosynthesis. S-adenosyl-L-methionine-dependent O-methyltransferase that methylates at 4-OH of the noviose moiety, the penultimate step in the novobiocin biosynthesis pathway. Novobiocin is an aminocoumarin family antibiotic that targets bacterial DNA gyrases. The sequence is that of Demethyldecarbamoylnovobiocin O-methyltransferase (novP) from Streptomyces niveus (Streptomyces spheroides).